Reading from the N-terminus, the 207-residue chain is Ribosomal RNA large subunit methyltransferase E (207 aa).

5 residues coordinate S-adenosyl-L-methionine: glycine 60, tryptophan 62, aspartate 80, aspartate 96, and aspartate 121. Residue lysine 161 is the Proton acceptor of the active site.

Belongs to the class I-like SAM-binding methyltransferase superfamily. RNA methyltransferase RlmE family.

It localises to the cytoplasm. It catalyses the reaction uridine(2552) in 23S rRNA + S-adenosyl-L-methionine = 2'-O-methyluridine(2552) in 23S rRNA + S-adenosyl-L-homocysteine + H(+). Its function is as follows. Specifically methylates the uridine in position 2552 of 23S rRNA at the 2'-O position of the ribose in the fully assembled 50S ribosomal subunit. In Pseudomonas paraeruginosa (strain DSM 24068 / PA7) (Pseudomonas aeruginosa (strain PA7)), this protein is Ribosomal RNA large subunit methyltransferase E.